We begin with the raw amino-acid sequence, 495 residues long: Cytochrome P450 94C1 (495 aa).

Residues 2–22 (LLIISFTIVSFFFIIIFSLFH) form a helical membrane-spanning segment. Cys439 contacts heme.

The protein belongs to the cytochrome P450 family. Heme serves as cofactor.

It localises to the membrane. Its subcellular location is the endoplasmic reticulum membrane. It carries out the reaction a 12-hydroxyjasmonyl-L-alpha-amino acid + 2 reduced [NADPH--hemoprotein reductase] + 2 O2 = a 12-hydroxy-12-oxojasmonyl-L-alpha-amino acid + 2 oxidized [NADPH--hemoprotein reductase] + 3 H2O + 3 H(+). Involved in the oxidation of the plant hormone jasmonoyl-L-isoleucine (JA-Ile), a bioactive phytohormone of the jasmonate-mediated signaling pathway. Converts 12-hydroxy-JA-Ile (12OH-JA-Ile) to the carboxy-derivative 12COOH-JA-Ile. Exerts negative feedback control on JA-Ile levels and plays a role in attenuation of jasmonate responses. Also functions as in-chain fatty acids hydroxylase in vitro. Catalyzes the hydroxylation of 12-hydroxy-jasmonoyl-L-phenylalanine (12OH-JA-Phe) in vitro. Converts 12OH-JA-Phe to the carboxy-derivative 12COOH-JA-Phe. The polypeptide is Cytochrome P450 94C1 (Arabidopsis thaliana (Mouse-ear cress)).